The following is a 355-amino-acid chain: Methionine import ATP-binding protein MetN (355 aa).

The ABC transporter domain occupies 8–250; it reads LKNIDITFTQ…PQEDLTQEFI (243 aa). Residue 42–49 participates in ATP binding; the sequence is GYSGAGKS.

The protein belongs to the ABC transporter superfamily. Methionine importer (TC 3.A.1.24) family. As to quaternary structure, the complex is composed of two ATP-binding proteins (MetN), two transmembrane proteins (MetI) and a solute-binding protein (MetQ).

Its subcellular location is the cell membrane. The catalysed reaction is L-methionine(out) + ATP + H2O = L-methionine(in) + ADP + phosphate + H(+). It catalyses the reaction D-methionine(out) + ATP + H2O = D-methionine(in) + ADP + phosphate + H(+). Its function is as follows. Part of the ABC transporter complex MetNIQ involved in methionine import. Responsible for energy coupling to the transport system. The polypeptide is Methionine import ATP-binding protein MetN (Streptococcus thermophilus (strain CNRZ 1066)).